We begin with the raw amino-acid sequence, 427 residues long: MTYKEYRDKVLNFIEEHEKWRSHTINLIASENITSPSVNRAVASGFMHKYAEGWPKQRYYQGCKYVDEVELIGVELFTKLFKSDYADLRPISGTNANQAVFFGLGQPGDKVIVLHTSHGGHISHMPFGAAGMRGLEVHTWPFDFESFNIDVDKAEKMIRELEPKIVMFGGSLFPFPHPVKELAPVAKEVGAFVVYDAAHVLGLIAGGEFQDPLREGADIMTASTHKTFPGPQGGVILYKKFADDETIAKLQWAIFPGVVSNHHLHHMAGKVITAAEMLEYGEAYAKQIVKNAKALAEALAEEGFKVIGEDQGYTKSHQVIVDVSDLHPAGGGWAAPLLEEAGIILNKNLLPWDPLEKVNEPSGLRIGVQEMTRVGMMEDEMREIAHFIKRVLIDKEDPKKVRKDVYYFRLEYQKVYYSFDYGLPMKE.

120–122 (GHI) lines the (6S)-5,6,7,8-tetrahydrofolate pocket. Residue Lys-226 is modified to N6-(pyridoxal phosphate)lysine.

It belongs to the SHMT family. Homodimer. It depends on pyridoxal 5'-phosphate as a cofactor.

It is found in the cytoplasm. It functions in the pathway amino-acid biosynthesis; glycine biosynthesis; glycine from L-serine: step 1/1. Functionally, catalyzes the reversible interconversion of serine and glycine with a modified folate serving as the one-carbon carrier. Also exhibits a pteridine-independent aldolase activity toward beta-hydroxyamino acids, producing glycine and aldehydes, via a retro-aldol mechanism. This is Serine hydroxymethyltransferase from Pyrococcus furiosus (strain ATCC 43587 / DSM 3638 / JCM 8422 / Vc1).